The chain runs to 871 residues: Protein translocase subunit SecA (871 aa).

Residues Gln80, 98–102, and Asp537 contribute to the ATP site; that span reads GEGKT.

The protein belongs to the SecA family. In terms of assembly, monomer and homodimer. Part of the essential Sec protein translocation apparatus which comprises SecA, SecYEG and auxiliary proteins SecDF. Other proteins may also be involved.

The protein resides in the cell inner membrane. It is found in the cytoplasm. It catalyses the reaction ATP + H2O + cellular proteinSide 1 = ADP + phosphate + cellular proteinSide 2.. Its function is as follows. Part of the Sec protein translocase complex. Interacts with the SecYEG preprotein conducting channel. Has a central role in coupling the hydrolysis of ATP to the transfer of proteins into and across the cell membrane, serving as an ATP-driven molecular motor driving the stepwise translocation of polypeptide chains across the membrane. The protein is Protein translocase subunit SecA of Thermotoga sp. (strain RQ2).